Here is a 215-residue protein sequence, read N- to C-terminus: Transmembrane protein 267 (215 aa).

3 helical membrane passes run 77–97, 114–134, and 178–198; these read FGEV…HFFQ, FLHC…AVHL, and SSFY…LMYL.

It localises to the membrane. In Mus musculus (Mouse), this protein is Transmembrane protein 267.